Consider the following 474-residue polypeptide: Synaptotagmin-17 (474 aa).

The disordered stretch occupies residues Trp-60–Leu-112. The span at Ser-96–Leu-112 shows a compositional bias: low complexity. 2 positions are modified to phosphoserine: Ser-118 and Ser-119. 2 C2 domains span residues Gln-184–Lys-310 and Glu-321–His-455.

This sequence belongs to the synaptotagmin family. In terms of tissue distribution, expressed abundantly in brain (frontal and temporal lobes, hippocampus, hypothalamus, amygdala, substantia nigra, and pituitary), kidney, and prostate. Expressed in fetal brain, kidney and lung. Expressed in melanocytes.

The protein resides in the membrane. Its function is as follows. Plays a role in dendrite formation by melanocytes. This is Synaptotagmin-17 (SYT17) from Homo sapiens (Human).